The primary structure comprises 248 residues: Cobalt transport protein CbiM (248 aa).

An N-terminal signal peptide occupies residues 1–29 (MKRVSVKNYLVCLLIAVCAIFVFPANASA). A run of 6 helical transmembrane segments spans residues 40-60 (GWCI…FFSI), 72-92 (TLLA…MPSV), 104-124 (LGAV…ILLF), 136-156 (TLGA…FGVF), 167-187 (GLAV…ITSV), and 210-230 (IFGF…VVIY).

Belongs to the CbiM family. In terms of assembly, forms an energy-coupling factor (ECF) transporter complex composed of an ATP-binding protein (A component, CbiO), a transmembrane protein (T component, CbiQ) and 2 possible substrate-capture proteins (S components, CbiM and CbiN) of unknown stoichimetry.

The protein localises to the cell membrane. It participates in cofactor biosynthesis; adenosylcobalamin biosynthesis. Its function is as follows. Part of the energy-coupling factor (ECF) transporter complex CbiMNOQ involved in cobalt import. The polypeptide is Cobalt transport protein CbiM (Ruminiclostridium cellulolyticum (strain ATCC 35319 / DSM 5812 / JCM 6584 / H10) (Clostridium cellulolyticum)).